A 315-amino-acid chain; its full sequence is Ribose-phosphate pyrophosphokinase (315 aa).

Residues 37 to 39 and 96 to 97 contribute to the ATP site; these read DGE and RQ. H131 and D170 together coordinate Mg(2+). K194 is a catalytic residue. Residues R196, D220, and 224 to 228 each bind D-ribose 5-phosphate; that span reads DTGGT.

The protein belongs to the ribose-phosphate pyrophosphokinase family. Class I subfamily. Homohexamer. Mg(2+) is required as a cofactor.

It localises to the cytoplasm. The catalysed reaction is D-ribose 5-phosphate + ATP = 5-phospho-alpha-D-ribose 1-diphosphate + AMP + H(+). It functions in the pathway metabolic intermediate biosynthesis; 5-phospho-alpha-D-ribose 1-diphosphate biosynthesis; 5-phospho-alpha-D-ribose 1-diphosphate from D-ribose 5-phosphate (route I): step 1/1. Its function is as follows. Involved in the biosynthesis of the central metabolite phospho-alpha-D-ribosyl-1-pyrophosphate (PRPP) via the transfer of pyrophosphoryl group from ATP to 1-hydroxyl of ribose-5-phosphate (Rib-5-P). This is Ribose-phosphate pyrophosphokinase from Photorhabdus laumondii subsp. laumondii (strain DSM 15139 / CIP 105565 / TT01) (Photorhabdus luminescens subsp. laumondii).